The sequence spans 92 residues: Envelope glycoprotein J (92 aa).

Residues 1 to 22 form the signal peptide; it reads MDRYAVRTWGIVGILGCAAVGA. The Extracellular portion of the chain corresponds to 23–49; sequence APTGPASDTTNATARLPTHPPLIRSGG. Asn-33 carries an N-linked (GlcNAc...) asparagine; by host glycan. The chain crosses the membrane as a helical span at residues 50-70; the sequence is FAVPLIVGGLCLMILGMACLL. Residues 71–92 lie on the Cytoplasmic side of the membrane; that stretch reads EVLRRLGRELARCCPHAGQFAP.

The protein belongs to the alphaherpesvirinae glycoprotein J family.

It is found in the host Golgi apparatus membrane. The protein resides in the host endoplasmic reticulum membrane. The protein localises to the host endosome membrane. Functions as an activator of viral protein expression and virus production. In turn, promotes cell-to-cell spread as well as syncytia formation. The protein is Envelope glycoprotein J (gJ) of Homo sapiens (Human).